Consider the following 127-residue polypeptide: Fatty acid-binding protein, liver-type (127 aa).

It belongs to the calycin superfamily. Fatty-acid binding protein (FABP) family.

The protein resides in the cytoplasm. In Epinephelus coioides (Orange-spotted grouper), this protein is Fatty acid-binding protein, liver-type (fabp1).